Reading from the N-terminus, the 692-residue chain is ATP-dependent DNA helicase DinG (692 aa).

One can recognise a Helicase ATP-binding domain in the interval 16 to 293; sequence NLGNQLDNFI…AELAEYKKAA (278 aa). 56–63 lines the ATP pocket; that stretch reads AGTGIGKS. A [4Fe-4S] cluster-binding site is contributed by cysteine 123. Positions 134–137 match the DEAH box motif; it reads NNDQ. Positions 192 and 202 each coordinate [4Fe-4S] cluster. The short motif at 247-250 is the DEAH box element; sequence DEAH. The Helicase C-terminal domain maps to 514-692; the sequence is LIKTLPEYLE…PPFKRVIEYS (179 aa).

The protein belongs to the helicase family. DinG subfamily. Type 1 sub-subfamily. [4Fe-4S] cluster is required as a cofactor.

The enzyme catalyses Couples ATP hydrolysis with the unwinding of duplex DNA at the replication fork by translocating in the 5'-3' direction. This creates two antiparallel DNA single strands (ssDNA). The leading ssDNA polymer is the template for DNA polymerase III holoenzyme which synthesizes a continuous strand.. The catalysed reaction is ATP + H2O = ADP + phosphate + H(+). In terms of biological role, DNA-dependent ATPase and 5'-3' DNA helicase. Unwinds D-loops, R-loops, forked DNA and G-quadruplex DNA. This is ATP-dependent DNA helicase DinG from Photobacterium profundum (strain SS9).